Consider the following 283-residue polypeptide: Elongation factor Ts (283 aa).

Residues 79–82 form an involved in Mg(2+) ion dislocation from EF-Tu region; it reads TDFV.

Belongs to the EF-Ts family.

It is found in the cytoplasm. Associates with the EF-Tu.GDP complex and induces the exchange of GDP to GTP. It remains bound to the aminoacyl-tRNA.EF-Tu.GTP complex up to the GTP hydrolysis stage on the ribosome. The sequence is that of Elongation factor Ts from Shewanella denitrificans (strain OS217 / ATCC BAA-1090 / DSM 15013).